The chain runs to 683 residues: Eukaryotic translation initiation factor 3 subunit B (683 aa).

The interval 1 to 25 (MAKKKGEEQDFEEEPNFDDPEGFVD) is disordered. A compositionally biased stretch (acidic residues) spans 9–25 (QDFEEEPNFDDPEGFVD). Residues 49 to 133 (NVIVVDNIPV…YTLLVNRFAD (85 aa)) enclose the RRM domain. 6 WD repeats span residues 199-238 (KRER…KVNK), 240-279 (AHSN…EKRT), 283-321 (DGMS…LLDM), 324-359 (IRVE…TLMA), 435-477 (EVKE…EPVL), and 522-567 (GDHY…KRVN). Residues 611–638 (MTRASKELIEKRAKLREQFTEYRSKRVK) are a coiled coil.

The protein belongs to the eIF-3 subunit B family. As to quaternary structure, component of the eukaryotic translation initiation factor 3 (eIF-3) complex.

It is found in the cytoplasm. Its function is as follows. RNA-binding component of the eukaryotic translation initiation factor 3 (eIF-3) complex, which is involved in protein synthesis of a specialized repertoire of mRNAs and, together with other initiation factors, stimulates binding of mRNA and methionyl-tRNAi to the 40S ribosome. The eIF-3 complex specifically targets and initiates translation of a subset of mRNAs involved in cell proliferation. This Anopheles gambiae (African malaria mosquito) protein is Eukaryotic translation initiation factor 3 subunit B.